Here is a 299-residue protein sequence, read N- to C-terminus: Probable lipid kinase YegS-like (299 aa).

The DAGKc domain maps to 2–133 (ATFPASLLIL…IDIAQVNDKT (132 aa)). Residues T40, 66-72 (GDGTINE), and T95 each bind ATP. Residues L215, D218, and L220 each contribute to the Mg(2+) site. E271 acts as the Proton acceptor in catalysis.

The protein belongs to the diacylglycerol/lipid kinase family. YegS lipid kinase subfamily. Requires Mg(2+) as cofactor. It depends on Ca(2+) as a cofactor.

It localises to the cytoplasm. In terms of biological role, probably phosphorylates lipids; the in vivo substrate is unknown. This is Probable lipid kinase YegS-like from Citrobacter koseri (strain ATCC BAA-895 / CDC 4225-83 / SGSC4696).